Here is a 294-residue protein sequence, read N- to C-terminus: MFHGSMVALVTPMEADGSVSDASLAELVEFHIQKGTDAIVAVGTTGESATLDFDEHCEVIRKVVDRVAGRIPVIAGTGANSTSEAIELTRCAMQAGADACLLVTPYYNKPTQEGLYLHHKAVAEAVPIPQILYNVPGRTAVDMHNDTVVRLAEISNIVGLKDATGDLDRARDLVARCGGKIDLYSGDDATAMEFLLLGGKGVISVTANVAPAEMHQMCEAAMRGDRAAAEAINARIDLLHRNLFLEANPIPVKWALEQMGLIPPGIRLPLTRLSERFHAPVREALAAAGITLNA.

Thr45 contributes to the pyruvate binding site. Tyr133 (proton donor/acceptor) is an active-site residue. The Schiff-base intermediate with substrate role is filled by Lys161. Residue Ile203 participates in pyruvate binding.

It belongs to the DapA family. In terms of assembly, homotetramer; dimer of dimers.

The protein resides in the cytoplasm. The catalysed reaction is L-aspartate 4-semialdehyde + pyruvate = (2S,4S)-4-hydroxy-2,3,4,5-tetrahydrodipicolinate + H2O + H(+). Its pathway is amino-acid biosynthesis; L-lysine biosynthesis via DAP pathway; (S)-tetrahydrodipicolinate from L-aspartate: step 3/4. In terms of biological role, catalyzes the condensation of (S)-aspartate-beta-semialdehyde [(S)-ASA] and pyruvate to 4-hydroxy-tetrahydrodipicolinate (HTPA). The sequence is that of 4-hydroxy-tetrahydrodipicolinate synthase from Thioalkalivibrio sulfidiphilus (strain HL-EbGR7).